Consider the following 573-residue polypeptide: Urease subunit alpha 2 (573 aa).

The 438-residue stretch at 136-573 (GAIDAHVHLI…LPMAQRYFLF (438 aa)) folds into the Urease domain. Ni(2+) is bound by residues His-141, His-143, and Lys-224. Position 224 is an N6-carboxylysine (Lys-224). His-226 serves as a coordination point for substrate. Positions 253 and 279 each coordinate Ni(2+). Residue His-327 is the Proton donor of the active site. Asp-367 is a Ni(2+) binding site.

The protein belongs to the metallo-dependent hydrolases superfamily. Urease alpha subunit family. In terms of assembly, may form a heterohexamer of 3 UreC (alpha) and 3 UreAB (gamma/beta) subunits. May also form a heterotrimer of UreA (gamma), UreB (beta) and UreC (alpha) subunits. Three heterotrimers associate to form the active enzyme. Ni cation serves as cofactor. Post-translationally, carboxylation allows a single lysine to coordinate two nickel ions.

It is found in the cytoplasm. It catalyses the reaction urea + 2 H2O + H(+) = hydrogencarbonate + 2 NH4(+). Its pathway is nitrogen metabolism; urea degradation; CO(2) and NH(3) from urea (urease route): step 1/1. The protein is Urease subunit alpha 2 of Streptomyces avermitilis (strain ATCC 31267 / DSM 46492 / JCM 5070 / NBRC 14893 / NCIMB 12804 / NRRL 8165 / MA-4680).